A 189-amino-acid chain; its full sequence is uncharacterized protein (189 aa).

The protein belongs to the flavoredoxin family. FMN is required as a cofactor.

This is an uncharacterized protein from Escherichia coli (strain K12).